Reading from the N-terminus, the 339-residue chain is Catalase-related peroxidase (339 aa).

The signal sequence occupies residues 1 to 31 (MIRIRNRWFRWLAIALASLVASIGIATVGFA). The active site involves histidine 58. Residue tyrosine 328 participates in heme binding.

It belongs to the catalase family. Heme serves as cofactor.

The protein resides in the periplasm. Functionally, has an organic peroxide-dependent peroxidase activity. This Synechococcus elongatus (strain ATCC 33912 / PCC 7942 / FACHB-805) (Anacystis nidulans R2) protein is Catalase-related peroxidase (srpA).